The chain runs to 229 residues: Ribosome maturation factor RimM (229 aa).

The interval 1–21 (MAGHDSGNAKRGRSPSFGVFV) is disordered. The PRC barrel domain maps to 148–229 (ADEFYWVDLI…RVVVDWEADY (82 aa)).

Belongs to the RimM family. Binds ribosomal protein uS19.

The protein resides in the cytoplasm. Functionally, an accessory protein needed during the final step in the assembly of 30S ribosomal subunit, possibly for assembly of the head region. Essential for efficient processing of 16S rRNA. May be needed both before and after RbfA during the maturation of 16S rRNA. It has affinity for free ribosomal 30S subunits but not for 70S ribosomes. This Burkholderia mallei (strain NCTC 10247) protein is Ribosome maturation factor RimM.